The chain runs to 406 residues: Multifunctional CCA protein (406 aa).

Residues Gly-8 and Arg-11 each coordinate ATP. CTP is bound by residues Gly-8 and Arg-11. Glu-21 and Asp-23 together coordinate Mg(2+). ATP is bound by residues Arg-91, Arg-137, and Arg-140. CTP-binding residues include Arg-91, Arg-137, and Arg-140. In terms of domain architecture, HD spans 225-326 (TGIHTLKVLE…LKLLNRVDAF (102 aa)).

The protein belongs to the tRNA nucleotidyltransferase/poly(A) polymerase family. Bacterial CCA-adding enzyme type 1 subfamily. Monomer. Can also form homodimers and oligomers. Mg(2+) serves as cofactor. Requires Ni(2+) as cofactor.

The enzyme catalyses a tRNA precursor + 2 CTP + ATP = a tRNA with a 3' CCA end + 3 diphosphate. It catalyses the reaction a tRNA with a 3' CCA end + 2 CTP + ATP = a tRNA with a 3' CCACCA end + 3 diphosphate. Catalyzes the addition and repair of the essential 3'-terminal CCA sequence in tRNAs without using a nucleic acid template. Adds these three nucleotides in the order of C, C, and A to the tRNA nucleotide-73, using CTP and ATP as substrates and producing inorganic pyrophosphate. tRNA 3'-terminal CCA addition is required both for tRNA processing and repair. Also involved in tRNA surveillance by mediating tandem CCA addition to generate a CCACCA at the 3' terminus of unstable tRNAs. While stable tRNAs receive only 3'-terminal CCA, unstable tRNAs are marked with CCACCA and rapidly degraded. This is Multifunctional CCA protein from Nitrosococcus oceani (strain ATCC 19707 / BCRC 17464 / JCM 30415 / NCIMB 11848 / C-107).